Here is a 260-residue protein sequence, read N- to C-terminus: Exosome complex component Rrp4 (260 aa).

One can recognise an S1 motif domain in the interval 59 to 128; sequence NDVVIGIVIV…SSMKVELALR (70 aa). In terms of domain architecture, KH spans 136–194; that stretch reads KTGQIIKVESVKVPRVIGHGGSMISMLKKETNCSIFVGQNGRIWIDGKDEDIELLSKAL.

It belongs to the RRP4 family. Component of the archaeal exosome complex. Forms a trimer of Rrp4 and/or Csl4 subunits. The trimer associates with a hexameric ring-like arrangement composed of 3 Rrp41-Rrp42 heterodimers.

Its subcellular location is the cytoplasm. In terms of biological role, non-catalytic component of the exosome, which is a complex involved in RNA degradation. Increases the RNA binding and the efficiency of RNA degradation. Confers strong poly(A) specificity to the exosome. The polypeptide is Exosome complex component Rrp4 (Methanosarcina acetivorans (strain ATCC 35395 / DSM 2834 / JCM 12185 / C2A)).